The chain runs to 302 residues: Sulfate adenylyltransferase subunit 2 (302 aa).

It belongs to the PAPS reductase family. CysD subfamily. Heterodimer composed of CysD, the smaller subunit, and CysN.

It catalyses the reaction sulfate + ATP + H(+) = adenosine 5'-phosphosulfate + diphosphate. It functions in the pathway sulfur metabolism; hydrogen sulfide biosynthesis; sulfite from sulfate: step 1/3. With CysN forms the ATP sulfurylase (ATPS) that catalyzes the adenylation of sulfate producing adenosine 5'-phosphosulfate (APS) and diphosphate, the first enzymatic step in sulfur assimilation pathway. APS synthesis involves the formation of a high-energy phosphoric-sulfuric acid anhydride bond driven by GTP hydrolysis by CysN coupled to ATP hydrolysis by CysD. The polypeptide is Sulfate adenylyltransferase subunit 2 (Xanthomonas euvesicatoria pv. vesicatoria (strain 85-10) (Xanthomonas campestris pv. vesicatoria)).